The primary structure comprises 661 residues: Threonine--tRNA ligase (661 aa).

Residues 1–64 (MSQAISLTFP…TTGRIEIITR (64 aa)) enclose the TGS domain. Residues 245–546 (DHRRLGREMD…LIENFAGHMP (302 aa)) are catalytic. Residues cysteine 341, histidine 392, and histidine 523 each coordinate Zn(2+).

The protein belongs to the class-II aminoacyl-tRNA synthetase family. As to quaternary structure, homodimer. Zn(2+) is required as a cofactor.

The protein localises to the cytoplasm. The enzyme catalyses tRNA(Thr) + L-threonine + ATP = L-threonyl-tRNA(Thr) + AMP + diphosphate + H(+). In terms of biological role, catalyzes the attachment of threonine to tRNA(Thr) in a two-step reaction: L-threonine is first activated by ATP to form Thr-AMP and then transferred to the acceptor end of tRNA(Thr). Also edits incorrectly charged L-seryl-tRNA(Thr). The sequence is that of Threonine--tRNA ligase from Rhizobium johnstonii (strain DSM 114642 / LMG 32736 / 3841) (Rhizobium leguminosarum bv. viciae).